The sequence spans 777 residues: Ribosome biogenesis protein ERB1 (777 aa).

Positions 1 to 122 are disordered; that stretch reads MAPTAPAKKR…RPNYRVVEDA (122 aa). Residues 36–67 show a composition bias toward acidic residues; the sequence is SEDDSDFVASGDEDEEDEDEDEDEDKDEDDEH. 7 WD repeats span residues 430–469, 473–513, 562–604, 606–645, 648–687, 691–731, and 747–777; these read GHEG…QVWA, SSDE…PEVE, TVRS…SQIP, RKLS…LVKV, PGAR…RPYK, FHPQ…DLME, and VDSL…RLWM.

It belongs to the WD repeat BOP1/ERB1 family. Component of the NOP7 complex, composed of ERB1, NOP7 and YTM1. The complex is held together by ERB1, which interacts with NOP7 via its N-terminal domain and with YTM1 via a high-affinity interaction between the seven-bladed beta-propeller domains of the 2 proteins. The NOP7 complex associates with the 66S pre-ribosome.

It localises to the nucleus. Its subcellular location is the nucleolus. It is found in the nucleoplasm. Its function is as follows. Component of the NOP7 complex, which is required for maturation of the 25S and 5.8S ribosomal RNAs and formation of the 60S ribosome. The polypeptide is Ribosome biogenesis protein ERB1 (Pyricularia oryzae (strain 70-15 / ATCC MYA-4617 / FGSC 8958) (Rice blast fungus)).